Consider the following 211-residue polypeptide: Large ribosomal subunit protein eL13 (211 aa).

It belongs to the eukaryotic ribosomal protein eL13 family. In terms of assembly, component of the 60S large ribosomal subunit (LSU).

The protein resides in the cytoplasm. Its function is as follows. Component of the ribosome, a large ribonucleoprotein complex responsible for the synthesis of proteins in the cell. The small ribosomal subunit (SSU) binds messenger RNAs (mRNAs) and translates the encoded message by selecting cognate aminoacyl-transfer RNA (tRNA) molecules. The large subunit (LSU) contains the ribosomal catalytic site termed the peptidyl transferase center (PTC), which catalyzes the formation of peptide bonds, thereby polymerizing the amino acids delivered by tRNAs into a polypeptide chain. The nascent polypeptides leave the ribosome through a tunnel in the LSU and interact with protein factors that function in enzymatic processing, targeting, and the membrane insertion of nascent chains at the exit of the ribosomal tunnel. As part of the LSU, it is probably required for its formation and the maturation of rRNAs. In Danio rerio (Zebrafish), this protein is Large ribosomal subunit protein eL13 (rpl13).